A 430-amino-acid chain; its full sequence is Adenylosuccinate synthetase (430 aa).

GTP is bound by residues 12–18 (GDEGKGK) and 40–42 (GHT). The active-site Proton acceptor is aspartate 13. Residues aspartate 13 and glycine 40 each coordinate Mg(2+). Residues 13–16 (DEGK), 38–41 (NAGH), threonine 128, arginine 142, glutamine 223, threonine 238, and arginine 302 each bind IMP. Histidine 41 functions as the Proton donor in the catalytic mechanism. 298–304 (TTTGRPR) contacts substrate. GTP contacts are provided by residues arginine 304, 330–332 (SID), and 413–415 (SVG).

This sequence belongs to the adenylosuccinate synthetase family. In terms of assembly, homodimer. Mg(2+) serves as cofactor.

Its subcellular location is the cytoplasm. It catalyses the reaction IMP + L-aspartate + GTP = N(6)-(1,2-dicarboxyethyl)-AMP + GDP + phosphate + 2 H(+). It functions in the pathway purine metabolism; AMP biosynthesis via de novo pathway; AMP from IMP: step 1/2. In terms of biological role, plays an important role in the de novo pathway of purine nucleotide biosynthesis. Catalyzes the first committed step in the biosynthesis of AMP from IMP. In Lactococcus lactis subsp. cremoris (strain MG1363), this protein is Adenylosuccinate synthetase.